The primary structure comprises 158 residues: MNQEKLAKLQAQVRIGGKGTARRKKKVVHRTATADDKKLQSSLKKLAVNNIAGIEEVNMIKDDGTVIHFNNPKVQASLSANTFAITGHAEAKPITEMLPGILSQLGADSLTSLRKLAEQFPRQVLDSKAPKPEDIDEEDDDVPDLVENFDEASKNEAN.

Residue lysine 5 is modified to N6-methyllysine. In terms of domain architecture, NAC-A/B spans 33–98 (TADDKKLQSS…AEAKPITEML (66 aa)). At threonine 111 the chain carries Phosphothreonine. A disordered region spans residues 122–158 (RQVLDSKAPKPEDIDEEDDDVPDLVENFDEASKNEAN). The span at 134-150 (DIDEEDDDVPDLVENFD) shows a compositional bias: acidic residues.

Belongs to the NAC-beta family.

The protein is Transcription factor BTF3 homolog 4 (BTF3L4) of Homo sapiens (Human).